Reading from the N-terminus, the 376-residue chain is S-adenosylmethionine synthase (376 aa).

ATP is bound at residue His14. Residue Asp16 participates in Mg(2+) binding. A K(+)-binding site is contributed by Glu42. Residues Glu55 and Gln98 each contribute to the L-methionine site. The tract at residues 98–108 is flexible loop; it reads QSPEIALGISS. Residues 158–160, 224–225, Asp233, 239–240, Ala256, and Lys260 contribute to the ATP site; these read DGK, RF, and RK. Asp233 serves as a coordination point for L-methionine. Lys264 is an L-methionine binding site.

It belongs to the AdoMet synthase family. In terms of assembly, homotetramer; dimer of dimers. The cofactor is Mg(2+). K(+) serves as cofactor.

It is found in the cytoplasm. It catalyses the reaction L-methionine + ATP + H2O = S-adenosyl-L-methionine + phosphate + diphosphate. The protein operates within amino-acid biosynthesis; S-adenosyl-L-methionine biosynthesis; S-adenosyl-L-methionine from L-methionine: step 1/1. Functionally, catalyzes the formation of S-adenosylmethionine (AdoMet) from methionine and ATP. The overall synthetic reaction is composed of two sequential steps, AdoMet formation and the subsequent tripolyphosphate hydrolysis which occurs prior to release of AdoMet from the enzyme. The polypeptide is S-adenosylmethionine synthase (Aquifex aeolicus (strain VF5)).